The sequence spans 320 residues: Putative fatty acid elongase 3 (320 aa).

N-linked (GlcNAc...) asparagine glycosylation is present at asparagine 14. 6 consecutive transmembrane segments (helical) span residues 33-53 (WMQN…AVIF), 67-87 (LDTP…LGFL), 120-140 (FWTE…IFIV), 145-165 (PLIF…WHAY), 203-223 (MAMV…IIGV), and 242-262 (LGLC…FFYH).

Belongs to the ELO family.

It is found in the membrane. The enzyme catalyses a very-long-chain acyl-CoA + malonyl-CoA + H(+) = a very-long-chain 3-oxoacyl-CoA + CO2 + CoA. Its pathway is lipid metabolism; fatty acid biosynthesis. In terms of biological role, could be implicated in synthesis of very long chain fatty acids. May be required for normally rapid growth. This Caenorhabditis elegans protein is Putative fatty acid elongase 3 (elo-3).